The chain runs to 466 residues: 3-isopropylmalate dehydratase large subunit (466 aa).

Cysteine 347, cysteine 407, and cysteine 410 together coordinate [4Fe-4S] cluster.

Belongs to the aconitase/IPM isomerase family. LeuC type 1 subfamily. Heterodimer of LeuC and LeuD. Requires [4Fe-4S] cluster as cofactor.

It carries out the reaction (2R,3S)-3-isopropylmalate = (2S)-2-isopropylmalate. It functions in the pathway amino-acid biosynthesis; L-leucine biosynthesis; L-leucine from 3-methyl-2-oxobutanoate: step 2/4. Functionally, catalyzes the isomerization between 2-isopropylmalate and 3-isopropylmalate, via the formation of 2-isopropylmaleate. This is 3-isopropylmalate dehydratase large subunit from Shewanella sediminis (strain HAW-EB3).